A 506-amino-acid chain; its full sequence is Probable Xaa-Pro aminopeptidase PADG_06815 (506 aa).

4 residues coordinate Mn(2+): aspartate 285, aspartate 296, glutamate 433, and glutamate 471.

Belongs to the peptidase M24B family. Mn(2+) serves as cofactor.

It catalyses the reaction Release of any N-terminal amino acid, including proline, that is linked to proline, even from a dipeptide or tripeptide.. In terms of biological role, catalyzes the removal of a penultimate prolyl residue from the N-termini of peptides. The chain is Probable Xaa-Pro aminopeptidase PADG_06815 from Paracoccidioides brasiliensis (strain Pb18).